The sequence spans 108 residues: Thioredoxin C-2 (108 aa).

A Thioredoxin domain is found at 2-108 (SATIVNTTDE…KLAAFIDQNI (107 aa)). C33 and C36 are disulfide-bonded.

Belongs to the thioredoxin family.

Functionally, participates in various redox reactions through the reversible oxidation of its active center dithiol to a disulfide and catalyzes dithiol-disulfide exchange reactions. This Corynebacterium nephridii protein is Thioredoxin C-2.